Reading from the N-terminus, the 396-residue chain is MVAGTRCLLALLLPQVLLGGAAGLIPELGRRKFAASWPGRSSSQPSDDVLSEFELRLLSMFGLKQRPTPSRDPVVPPYMLDLYRLHSGQPGAPAPGHRLERAASLANTVRTFHHEESLEELPEMSGKTTRRFFFNLTSIPTEEFITSAELQVFGKHMPEALENNSSFHHRINIFEIIKPATANSKFPVTRLLDTRLVTQNASRWESFDVTPAVMRWTAQGLTNHGFVVEVAHPEDSYGASKRHVRISRSLHQDEHSWSQIRPLLVTFGHDGKGHPLHRREKRQAKHKQRKRLKSSCKRHPLYVDFSDVGWNDWIVAPPGYHAFYCHGECPFPLADHLNSTNHAIVQTLVNSVNSKIPKACCVPTELSAISMLYLDENEKVVLKNYQDMVVEGCGCR.

An N-terminal signal peptide occupies residues 1-23 (MVAGTRCLLALLLPQVLLGGAAG). Residues 24–282 (LIPELGRRKF…GHPLHRREKR (259 aa)) constitute a propeptide, cleaved by PCSK5. Position 87 is a phosphoserine (serine 87). 4 N-linked (GlcNAc...) asparagine glycosylation sites follow: asparagine 135, asparagine 163, asparagine 164, and asparagine 200. The disordered stretch occupies residues 272 to 293 (KGHPLHRREKRQAKHKQRKRLK). The span at 274–293 (HPLHRREKRQAKHKQRKRLK) shows a compositional bias: basic residues. 3 cysteine pairs are disulfide-bonded: cysteine 296-cysteine 361, cysteine 325-cysteine 393, and cysteine 329-cysteine 395. Asparagine 338 carries N-linked (GlcNAc...) asparagine glycosylation.

It belongs to the TGF-beta family. As to quaternary structure, homodimer; disulfide-linked. Interacts with SOSTDC1. Interacts with GREM2, RGMA, RGMB and RGMC. Interacts with ASPN. Interacts with MAFP5. Interacts with FBN1 (via N-terminal domain) and FBN2. Interacts with type I receptor BMPR1A. Interacts with type II receptor BMPR2. Interacts with ERFE. Interacts with BMPR1A/ALK3; the interaction may induce HAMP expression. Interacts with TGFBR3.

The protein localises to the secreted. In terms of biological role, growth factor of the TGF-beta superfamily that plays essential roles in many developmental processes, including cardiogenesis, neurogenesis, and osteogenesis. Induces cartilage and bone formation. Initiates the canonical BMP signaling cascade by associating with type I receptor BMPR1A and type II receptor BMPR2. Once all three components are bound together in a complex at the cell surface, BMPR2 phosphorylates and activates BMPR1A. In turn, BMPR1A propagates signal by phosphorylating SMAD1/5/8 that travel to the nucleus and act as activators and repressors of transcription of target genes. Also acts to promote expression of HAMP, via the interaction with its receptor BMPR1A/ALK3. Can also signal through non-canonical pathways such as ERK/MAP kinase signaling cascade that regulates osteoblast differentiation. Also stimulates the differentiation of myoblasts into osteoblasts via the EIF2AK3-EIF2A-ATF4 pathway by stimulating EIF2A phosphorylation which leads to increased expression of ATF4 which plays a central role in osteoblast differentiation. Acts as a positive regulator of odontoblast differentiation during mesenchymal tooth germ formation, expression is repressed during the bell stage by MSX1-mediated inhibition of CTNNB1 signaling. The protein is Bone morphogenetic protein 2 (BMP2) of Dama dama (Fallow deer).